A 110-amino-acid polypeptide reads, in one-letter code: MFSKDGLNNLMQHAQKIQEQMKKIQQEVSEIEVTGESGAGAVKVTLIGSHYCKKIELDKNTILEHDKEILEDLITAAFNDAVRKISDLQKQKMSSISSEMKFSNNLNLPF.

This sequence belongs to the YbaB/EbfC family. As to quaternary structure, homodimer.

It is found in the cytoplasm. The protein localises to the nucleoid. In terms of biological role, binds to DNA and alters its conformation. May be involved in regulation of gene expression, nucleoid organization and DNA protection. This Buchnera aphidicola subsp. Baizongia pistaciae (strain Bp) protein is Nucleoid-associated protein bbp_426.